A 192-amino-acid polypeptide reads, in one-letter code: 3-hydroxyanthranilate 3,4-dioxygenase (192 aa).

Position 50 (R50) interacts with O2. Fe cation contacts are provided by H54, E60, and H102. Position 60 (E60) interacts with substrate. Substrate contacts are provided by R106 and E116. C131, C134, C168, and C171 together coordinate a divalent metal cation.

This sequence belongs to the 3-HAO family. It depends on Fe(2+) as a cofactor.

The protein resides in the cytoplasm. The catalysed reaction is 3-hydroxyanthranilate + O2 = (2Z,4Z)-2-amino-3-carboxymuconate 6-semialdehyde. It functions in the pathway cofactor biosynthesis; NAD(+) biosynthesis; quinolinate from L-kynurenine: step 3/3. Its function is as follows. Catalyzes the oxidative ring opening of 3-hydroxyanthranilate to 2-amino-3-carboxymuconate semialdehyde, which spontaneously cyclizes to quinolinate. This is 3-hydroxyanthranilate 3,4-dioxygenase from Coccidioides immitis (strain RS) (Valley fever fungus).